Here is a 186-residue protein sequence, read N- to C-terminus: Dynactin subunit 3 (186 aa).

A2 carries the N-acetylalanine modification.

Belongs to the dynactin subunit 3 family. As to quaternary structure, subunit of dynactin, a multiprotein complex part of a tripartite complex with dynein and a adapter, such as BICDL1, BICD2 or HOOK3. The dynactin complex is built around ACTR1A/ACTB filament and consists of an actin-related filament composed of a shoulder domain, a pointed end and a barbed end. Its length is defined by its flexible shoulder domain. The soulder is composed of 2 DCTN1 subunits, 4 DCTN2 and 2 DCTN3. The 4 DCNT2 (via N-terminus) bind the ACTR1A filament and act as molecular rulers to determine the length. The pointed end is important for binding dynein-dynactin cargo adapters. Consists of 4 subunits: ACTR10, DCNT4, DCTN5 and DCTN6. The barbed end is composed of a CAPZA1:CAPZB heterodimers, which binds ACTR1A/ACTB filament and dynactin and stabilizes dynactin.

The protein resides in the cytoplasm. The protein localises to the cytoskeleton. Its subcellular location is the microtubule organizing center. It localises to the centrosome. It is found in the chromosome. The protein resides in the centromere. The protein localises to the kinetochore. Its subcellular location is the spindle. It localises to the cleavage furrow. It is found in the midbody. Part of the dynactin complex that activates the molecular motor dynein for ultra-processive transport along microtubules. Together with dynein is involved in spindle assembly and cytokinesis. The chain is Dynactin subunit 3 from Sus scrofa (Pig).